The sequence spans 107 residues: Iron-sulfur cluster assembly protein CyaY (107 aa).

Belongs to the frataxin family.

In terms of biological role, involved in iron-sulfur (Fe-S) cluster assembly. May act as a regulator of Fe-S biogenesis. This chain is Iron-sulfur cluster assembly protein CyaY, found in Neisseria gonorrhoeae (strain ATCC 700825 / FA 1090).